Here is a 635-residue protein sequence, read N- to C-terminus: MIHVTCNQEAFELPEGASAMDLANKMKQSHCFVGALINDQEKDLSTTLQDGDTVLFLTWDDPKGREIFLHTSAHILAQAVLRLWPSAQPTIGPVIDQGFYYDFANLSISEEDFPAIEAMAKTIAEEKFPISRQVFPDKEAALAYFSQNPFKAELIAELPEEVEISAYTQGEFLDLCRGPHLPSTAPVKAFKLLRTSSAYWKGDPSRESLIRIYGVSFPTTKELKEHLHQLEEAKKRDHRVLGTKLDLFSQQTCSAGMPFFHPRGMVVWNALVDYWKRLHQRAGYQQIQTPQLMNRELWEISGHWENYKENMYTLTVDEEDYAIKPMNCPGCMLYYKTQLHSYREFPLRIAEIGHVHRHELSGALSGLMRVRTFHQDDAHVFLTPEQVEEETLNILNLVSELYGTFGLEYHLELSTRPEQGTIGSDDLWELATEALKRALVKSQKPFIISPGEGAFYGPKIDIHVKDAINRTWQCGTIQLDMFLPERFDLKYTNAQGEKSTPIMLHRALFGSIERFLGILIEHFKGRFPLWLSPEHVRIITVADRHEARAQELAKHFSQMGIIVSVDSSNESVSKKIRNAQNMQVNYMITIGDKELETHLLAVRTRDNRVLNDIAVEQFSHVILEELRSLSLTPSL.

The TGS domain occupies 1-58 (MIHVTCNQEAFELPEGASAMDLANKMKQSHCFVGALINDQEKDLSTTLQDGDTVLFLT). Residues 237 to 528 (DHRVLGTKLD…LIEHFKGRFP (292 aa)) are catalytic. 3 residues coordinate Zn(2+): Cys-328, His-379, and His-505.

This sequence belongs to the class-II aminoacyl-tRNA synthetase family. As to quaternary structure, homodimer. Zn(2+) serves as cofactor.

Its subcellular location is the cytoplasm. It catalyses the reaction tRNA(Thr) + L-threonine + ATP = L-threonyl-tRNA(Thr) + AMP + diphosphate + H(+). In terms of biological role, catalyzes the attachment of threonine to tRNA(Thr) in a two-step reaction: L-threonine is first activated by ATP to form Thr-AMP and then transferred to the acceptor end of tRNA(Thr). Also edits incorrectly charged L-seryl-tRNA(Thr). The chain is Threonine--tRNA ligase from Chlamydia trachomatis serovar L2b (strain UCH-1/proctitis).